The sequence spans 882 residues: Leucine--tRNA ligase (882 aa).

Residues 43 to 53 carry the 'HIGH' region motif; the sequence is PYPSGNLHMGH. The 'KMSKS' region signature appears at 632–636; sequence TMSKS. Residue lysine 635 coordinates ATP.

The protein belongs to the class-I aminoacyl-tRNA synthetase family.

The protein localises to the cytoplasm. It carries out the reaction tRNA(Leu) + L-leucine + ATP = L-leucyl-tRNA(Leu) + AMP + diphosphate. This Synechococcus sp. (strain JA-2-3B'a(2-13)) (Cyanobacteria bacterium Yellowstone B-Prime) protein is Leucine--tRNA ligase.